We begin with the raw amino-acid sequence, 199 residues long: 3-isopropylmalate dehydratase small subunit (199 aa).

Belongs to the LeuD family. LeuD type 1 subfamily. Heterodimer of LeuC and LeuD.

The enzyme catalyses (2R,3S)-3-isopropylmalate = (2S)-2-isopropylmalate. It participates in amino-acid biosynthesis; L-leucine biosynthesis; L-leucine from 3-methyl-2-oxobutanoate: step 2/4. Functionally, catalyzes the isomerization between 2-isopropylmalate and 3-isopropylmalate, via the formation of 2-isopropylmaleate. This Mycobacteroides abscessus (strain ATCC 19977 / DSM 44196 / CCUG 20993 / CIP 104536 / JCM 13569 / NCTC 13031 / TMC 1543 / L948) (Mycobacterium abscessus) protein is 3-isopropylmalate dehydratase small subunit.